The chain runs to 217 residues: CD99 antigen-like protein 2 (217 aa).

The first 25 residues, methionine 1–glycine 25, serve as a signal peptide directing secretion. At aspartate 26–glycine 141 the chain is on the extracellular side. Residues valine 36 to methionine 136 are disordered. Positions threonine 50 to lysine 64 are enriched in low complexity. Positions alanine 70 to aspartate 82 are enriched in acidic residues. The segment covering glutamine 83–lysine 92 has biased composition (basic and acidic residues). Serine 134 carries O-linked (Xyl...) (chondroitin sulfate) serine glycosylation. The helical transmembrane segment at threonine 142 to isoleucine 162 threads the bilayer. Residues serine 163 to isoleucine 217 lie on the Cytoplasmic side of the membrane.

Belongs to the CD99 family. O-glycosylated.

It is found in the cell membrane. The protein localises to the cell junction. Its subcellular location is the secreted. In terms of biological role, plays a role in a late step of leukocyte extravasation helping cells to overcome the endothelial basement membrane. Acts at the same site as, but independently of, PECAM1. Homophilic adhesion molecule, but these interactions may not be required for cell aggregation. The chain is CD99 antigen-like protein 2 (CD99L2) from Bos taurus (Bovine).